We begin with the raw amino-acid sequence, 281 residues long: Small ribosomal subunit biogenesis GTPase RsgA (281 aa).

Positions 59–212 (QNEFIRPKVA…LIDTPGFSSL (154 aa)) constitute a CP-type G domain. GTP-binding positions include 108–111 (TKAD) and 155–163 (GQSGVGKTT). Positions 235, 240, 242, and 250 each coordinate Zn(2+).

This sequence belongs to the TRAFAC class YlqF/YawG GTPase family. RsgA subfamily. As to quaternary structure, monomer. Associates with 30S ribosomal subunit, binds 16S rRNA. Zn(2+) is required as a cofactor.

It is found in the cytoplasm. One of several proteins that assist in the late maturation steps of the functional core of the 30S ribosomal subunit. Helps release RbfA from mature subunits. May play a role in the assembly of ribosomal proteins into the subunit. Circularly permuted GTPase that catalyzes slow GTP hydrolysis, GTPase activity is stimulated by the 30S ribosomal subunit. In Mycoplasmopsis agalactiae (strain NCTC 10123 / CIP 59.7 / PG2) (Mycoplasma agalactiae), this protein is Small ribosomal subunit biogenesis GTPase RsgA.